The chain runs to 256 residues: Small ribosomal subunit protein uS2 (256 aa).

This sequence belongs to the universal ribosomal protein uS2 family.

This is Small ribosomal subunit protein uS2 from Streptococcus equi subsp. equi (strain 4047).